We begin with the raw amino-acid sequence, 301 residues long: MTRMAEKPISPTKTRTRFEDIQAHYDVSDDFFALFQDPTRTYSCAYFEPPELTLEEAQYAKVDLNLDKLDLKPGMTLLDIGCGWGTTMRRAVERLDVNVIGLTLSKNQHARCEQVLASIDTNRSRQVLLQGWEDFAEPVDRIVSIEAFEHFGHENYDDFFKRCFNIMPADGRMTVQSSVSYHPYEMAARGKKLSFETARFIKFIVTEIFPGGRLPSTEMMVEHGEKAGFTVPEPLSLRPHYIKTLRIWGDTLQSNKDKAIEVTSEEVYNRYMKYLRGCEHYFTDEMLDCSLVTYLKPGAAA.

S-adenosyl-L-methionine is bound by residues 42 to 43 (YS), 81 to 83 (GCG), 103 to 108 (TLSKNQ), 132 to 133 (WE), and Ile145. The active site involves Cys278.

Belongs to the CFA/CMAS family. In terms of assembly, monomer.

It functions in the pathway lipid metabolism; mycolic acid biosynthesis. Functionally, involved in the biosynthesis of hydroxymycolate, a common precursor of oxygenated mycolic acids (methoxymycolate and ketomycolate). Probably transfers a methyl group from the S-adenosylmethionine (SAM) cofactor and, subsequently or simultaneously, a water molecule onto the double bound of ethylene substrates, leading to the formation of the hydroxylated product at the distal position. This chain is Hydroxymycolate synthase MmaA4 (cmaA), found in Mycobacterium bovis (strain ATCC BAA-935 / AF2122/97).